A 104-amino-acid chain; its full sequence is Iron-sulfur cluster assembly protein CyaY (104 aa).

The protein belongs to the frataxin family.

Involved in iron-sulfur (Fe-S) cluster assembly. May act as a regulator of Fe-S biogenesis. The protein is Iron-sulfur cluster assembly protein CyaY of Aeromonas hydrophila subsp. hydrophila (strain ATCC 7966 / DSM 30187 / BCRC 13018 / CCUG 14551 / JCM 1027 / KCTC 2358 / NCIMB 9240 / NCTC 8049).